The primary structure comprises 241 residues: Carboxy-S-adenosyl-L-methionine synthase (241 aa).

S-adenosyl-L-methionine contacts are provided by residues Y38, 63–65 (GCS), 88–89 (DN), 116–117 (DI), N131, and R198.

It belongs to the class I-like SAM-binding methyltransferase superfamily. Cx-SAM synthase family. In terms of assembly, homodimer.

It carries out the reaction prephenate + S-adenosyl-L-methionine = carboxy-S-adenosyl-L-methionine + 3-phenylpyruvate + H2O. Its function is as follows. Catalyzes the conversion of S-adenosyl-L-methionine (SAM) to carboxy-S-adenosyl-L-methionine (Cx-SAM). This Histophilus somni (strain 2336) (Haemophilus somnus) protein is Carboxy-S-adenosyl-L-methionine synthase.